A 409-amino-acid chain; its full sequence is Peptidase T (409 aa).

A Zn(2+)-binding site is contributed by H78. D80 is a catalytic residue. Residue D139 coordinates Zn(2+). The active-site Proton acceptor is the E173. Zn(2+)-binding residues include E174, D196, and H378.

The protein belongs to the peptidase M20B family. It depends on Zn(2+) as a cofactor.

It localises to the cytoplasm. It catalyses the reaction Release of the N-terminal residue from a tripeptide.. Functionally, cleaves the N-terminal amino acid of tripeptides. This is Peptidase T from Shewanella sediminis (strain HAW-EB3).